Consider the following 63-residue polypeptide: Protein DsrB (63 aa).

The protein belongs to the DsrB family.

This chain is Protein DsrB, found in Yersinia pseudotuberculosis serotype O:1b (strain IP 31758).